We begin with the raw amino-acid sequence, 342 residues long: Isopentenyl-diphosphate delta-isomerase (342 aa).

A substrate-binding site is contributed by Arg-11–Lys-12. Residues Ser-68, Ser-69–Thr-71, Ser-99, and Asn-127 each bind FMN. A substrate-binding site is contributed by Ser-99–Arg-101. Substrate is bound at residue Gln-162. Position 163 (Glu-163) interacts with Mg(2+). Residues Lys-194, Thr-224, Gly-274–Lys-276, and Ala-295–Gly-296 each bind FMN.

The protein belongs to the IPP isomerase type 2 family. Homooctamer. Dimer of tetramers. It depends on FMN as a cofactor. The cofactor is NADPH. Requires Mg(2+) as cofactor.

Its subcellular location is the cytoplasm. The enzyme catalyses isopentenyl diphosphate = dimethylallyl diphosphate. In terms of biological role, involved in the biosynthesis of isoprenoids. Catalyzes the 1,3-allylic rearrangement of the homoallylic substrate isopentenyl (IPP) to its allylic isomer, dimethylallyl diphosphate (DMAPP). The protein is Isopentenyl-diphosphate delta-isomerase of Rickettsia conorii (strain ATCC VR-613 / Malish 7).